Consider the following 735-residue polypeptide: Ion-translocating oxidoreductase complex subunit C (735 aa).

4Fe-4S ferredoxin-type domains are found at residues 368–397 and 407–436; these read MGAP…QQLY and KATA…VQYF. Positions 377, 380, 383, 387, 416, 419, 422, and 426 each coordinate [4Fe-4S] cluster. The tract at residues 562–713 is disordered; that stretch reads AIARAKARKQ…AEPADPRKAA (152 aa).

This sequence belongs to the 4Fe4S bacterial-type ferredoxin family. RnfC subfamily. As to quaternary structure, the complex is composed of six subunits: RsxA, RsxB, RsxC, RsxD, RsxE and RsxG. [4Fe-4S] cluster serves as cofactor.

It is found in the cell inner membrane. Its function is as follows. Part of a membrane-bound complex that couples electron transfer with translocation of ions across the membrane. Required to maintain the reduced state of SoxR. The sequence is that of Ion-translocating oxidoreductase complex subunit C from Salmonella newport (strain SL254).